A 98-amino-acid chain; its full sequence is NADH-ubiquinone oxidoreductase chain 4L (98 aa).

3 helical membrane passes run 1 to 21 (MSMVYANIFLAFIMSLMGLLM), 29 to 49 (SLLCLEGMMLSLFVMMTVTIL), and 61 to 81 (IILLVFAACEAALGLSLLVMV).

The protein belongs to the complex I subunit 4L family. In terms of assembly, core subunit of respiratory chain NADH dehydrogenase (Complex I) which is composed of 45 different subunits.

It is found in the mitochondrion inner membrane. It catalyses the reaction a ubiquinone + NADH + 5 H(+)(in) = a ubiquinol + NAD(+) + 4 H(+)(out). In terms of biological role, core subunit of the mitochondrial membrane respiratory chain NADH dehydrogenase (Complex I) which catalyzes electron transfer from NADH through the respiratory chain, using ubiquinone as an electron acceptor. Part of the enzyme membrane arm which is embedded in the lipid bilayer and involved in proton translocation. This Halichoerus grypus (Gray seal) protein is NADH-ubiquinone oxidoreductase chain 4L (MT-ND4L).